Consider the following 498-residue polypeptide: NADP-dependent glyceraldehyde-3-phosphate dehydrogenase (498 aa).

Substrate contacts are provided by residues R118 and 171–172 (NY). The NADP(+) site is built by K194, T197, and D232. 247-251 (GGDTG) is an NAD(+) binding site. E266 functions as the Proton acceptor in the catalytic mechanism. Substrate is bound at residue 299-301 (RCT). The Nucleophile role is filled by C300. E393 contributes to the NADP(+) binding site. Residue R453 coordinates substrate.

It belongs to the aldehyde dehydrogenase family.

The protein resides in the cytoplasm. The catalysed reaction is D-glyceraldehyde 3-phosphate + NADP(+) + H2O = (2R)-3-phosphoglycerate + NADPH + 2 H(+). Functionally, important as a means of generating NADPH for biosynthetic reactions. The sequence is that of NADP-dependent glyceraldehyde-3-phosphate dehydrogenase (GPN1) from Zea mays (Maize).